Here is a 423-residue protein sequence, read N- to C-terminus: MTKAMEELLTSNLFVQQVKKLYKVGELLGLDLDTLEALSQPERVIQVKIQIRGSDGKLKTFMGWRSQHNSALGPYKGGVRYSPNVTQDEVIALSMIMTWKNSLLLLPYGGGKGGIRVDPKKLTLKELEDLSRKYVQLIHNYLGSDVDIPAPDINTNPQTMAWFLDEYIKITGEVDFAVFTGKPSELGGIGVRLYSTGLGVATIAREAANKFIGGIEGSRVIIQGFGNVGSFTAKFLNEMGAKIIGVSDIGGGVISDDGIDVNKALEVVQSTGSVVNYPEGKKVTNEELLTSDCDILIPAAVENVINKFNAPKVKAKLIVEGANGPLTADADEIIKQRGIVVIPDILANAGGVVGSYVEWANNKSGGIISDEEAKKLIIDRMTNAFNALYEFHKRKFADQDLRTVAMALAVDRVVRAMKARGLL.

The active site involves Lys112.

The protein belongs to the Glu/Leu/Phe/Val dehydrogenases family. Homohexamer.

It carries out the reaction L-glutamate + NADP(+) + H2O = 2-oxoglutarate + NH4(+) + NADPH + H(+). The protein is NADP-specific glutamate dehydrogenase (gdhA) of Saccharolobus shibatae (strain ATCC 51178 / DSM 5389 / JCM 8931 / NBRC 15437 / B12) (Sulfolobus shibatae).